The sequence spans 76 residues: Precursor of CEP7 (76 aa).

The N-terminal stretch at 1-27 (MAKCTLTSLILLLIVLVLIQESHIVEG) is a signal peptide. The propeptide occupies 28-61 (RPLKSSRISNVSKKFAAGNSNLSSKLTTEDHSLD). 2 N-linked (GlcNAc...) asparagine glycosylation sites follow: asparagine 37 and asparagine 48. A disordered region spans residues 49 to 76 (LSSKLTTEDHSLDAFRPTNPGNSPGIGH). Hydroxyproline is present on residues proline 65, proline 68, and proline 72.

This sequence belongs to the C-terminally encoded plant signaling peptide (CEP) family. In terms of assembly, interacts with CEP receptors (e.g. CEPR1 and CEPR2). Post-translationally, the mature small signaling peptide is generated by proteolytic processing of the longer precursor.

Its subcellular location is the secreted. It localises to the extracellular space. The protein resides in the apoplast. In terms of biological role, extracellular signaling peptide that may regulate primary root growth rate and systemic nitrogen (N)-demand signaling. Mediates up-regulation of genes involved in N uptake and assimilation pathways. The chain is Precursor of CEP7 from Arabidopsis thaliana (Mouse-ear cress).